Consider the following 478-residue polypeptide: Sulfate adenylyltransferase subunit 1 (478 aa).

The region spanning 28–244 (KTMLRFLTCG…LESVDVVNAR (217 aa)) is the tr-type G domain. The interval 37-44 (GSVDDGKS) is G1. GTP is bound at residue 37–44 (GSVDDGKS). Residues 95 to 99 (GITID) form a G2 region. A G3 region spans residues 116–119 (DTPG). GTP is bound by residues 116–120 (DTPGH) and 171–174 (NKMD). The interval 171–174 (NKMD) is G4. Residues 209 to 211 (SAL) are G5.

The protein belongs to the TRAFAC class translation factor GTPase superfamily. Classic translation factor GTPase family. CysN/NodQ subfamily. Heterodimer composed of CysD, the smaller subunit, and CysN.

The enzyme catalyses sulfate + ATP + H(+) = adenosine 5'-phosphosulfate + diphosphate. The protein operates within sulfur metabolism; hydrogen sulfide biosynthesis; sulfite from sulfate: step 1/3. In terms of biological role, with CysD forms the ATP sulfurylase (ATPS) that catalyzes the adenylation of sulfate producing adenosine 5'-phosphosulfate (APS) and diphosphate, the first enzymatic step in sulfur assimilation pathway. APS synthesis involves the formation of a high-energy phosphoric-sulfuric acid anhydride bond driven by GTP hydrolysis by CysN coupled to ATP hydrolysis by CysD. This chain is Sulfate adenylyltransferase subunit 1, found in Yersinia pseudotuberculosis serotype O:1b (strain IP 31758).